The chain runs to 258 residues: Thyroxine 5-deiodinase (258 aa).

A helical; Signal-anchor for type II membrane protein membrane pass occupies residues 1–20 (AACILLFPRFLLTAVMLWLL). Over 21–258 (DFLCIRKKML…QSPGAVVIQV (238 aa)) the chain is Extracellular. U122 is an active-site residue. U122 is a non-standard amino acid (selenocysteine).

This sequence belongs to the iodothyronine deiodinase family. Monomer. Homodimer. May undergo minor heretodimerization with DIO1 and DIO2.

It is found in the cell membrane. Its subcellular location is the endosome membrane. It carries out the reaction 3,3',5'-triiodo-L-thyronine + iodide + A + H(+) = L-thyroxine + AH2. The enzyme catalyses 3,3'-diiodo-L-thyronine + iodide + A + H(+) = 3,3',5-triiodo-L-thyronine + AH2. It catalyses the reaction 3-iodo-L-thyronine + iodide + A + H(+) = 3,5-diiodo-L-thyronine + AH2. The catalysed reaction is L-thyronine + iodide + A + H(+) = 3-iodo-L-thyronine + AH2. It carries out the reaction 3',5'-diiodo-L-thyronine + iodide + A + H(+) = 3,3',5'-triiodo-L-thyronine + AH2. The enzyme catalyses 3'-iodo-L-thyronine + iodide + A + H(+) = 3,3'-diiodo-L-thyronine + AH2. It catalyses the reaction 3,3',5'-triiodothyronamine + iodide + A + H(+) = 3,3',5,5'-tetraiodothyronamine + AH2. The catalysed reaction is 3',5'-diiodothyronamine + iodide + A + H(+) = 3,3',5'-triiodothyronamine + AH2. It carries out the reaction 3,3'-diiodothyronamine + iodide + A + H(+) = 3,3',5-triiodothyronamine + AH2. The enzyme catalyses 3-iodothyronamine + iodide + A + H(+) = 3,5-diiodothyronamine + AH2. It catalyses the reaction 3'-iodothyronamine + iodide + A + H(+) = 3,3'-diiodothyronamine + AH2. The catalysed reaction is thyronamine + iodide + A + H(+) = 3-iodothyronamine + AH2. In terms of biological role, plays a crucial role in the metabolism of thyroid hormones (TH) and has specific roles in TH activation and inactivation by deiodination. Catalyzes the deiodination of L-thyroxine (T4) to 3,3',5'-triiodothyronine (rT3) and 3,5,3'-triiodothyronine (T3) to 3,3'-diiodothyronine (3,3'-T2) via inner-ring deiodination (IRD). Catalyzes the deiodination of rT3 to 3',5'-diiodothyronine (3',5'-T2), 3,3'-T2 to 3'-monoiodothyronine (3'-T1) and 3,5-diiodothyronine (3,5-T2) to 3-monoiodothyronine (3-T1) via IRD. Catalyzes the deiodination of 3-T1 to L-thyronine (T0) via outer-ring deiodination (ORD). Catalyzes the tyrosyl ring deiodinations of 3,3',5,5'-tetraiodothyronamine, 3,3',5'-triiodothyronamine, 3,5,3'-triiodothyronamine, 3,5-diiodothyronamine, 3,3'-diiodothyronamine and 3-iodothyronamine. The polypeptide is Thyroxine 5-deiodinase (DIO3) (Gallus gallus (Chicken)).